A 647-amino-acid chain; its full sequence is DNA ligase (647 aa).

NAD(+)-binding positions include 30–34 (DEEYD), 79–80 (SM), and Glu-105. The N6-AMP-lysine intermediate role is filled by Lys-107. Positions 128, 162, and 301 each coordinate NAD(+). Cys-395, Cys-398, Cys-411, and Cys-416 together coordinate Zn(2+). The BRCT domain occupies 570 to 647 (KSDSVIFGKT…ESAFNELVKE (78 aa)).

It belongs to the NAD-dependent DNA ligase family. LigA subfamily. Mg(2+) is required as a cofactor. Requires Mn(2+) as cofactor.

The catalysed reaction is NAD(+) + (deoxyribonucleotide)n-3'-hydroxyl + 5'-phospho-(deoxyribonucleotide)m = (deoxyribonucleotide)n+m + AMP + beta-nicotinamide D-nucleotide.. DNA ligase that catalyzes the formation of phosphodiester linkages between 5'-phosphoryl and 3'-hydroxyl groups in double-stranded DNA using NAD as a coenzyme and as the energy source for the reaction. It is essential for DNA replication and repair of damaged DNA. In Campylobacter jejuni subsp. doylei (strain ATCC BAA-1458 / RM4099 / 269.97), this protein is DNA ligase.